A 619-amino-acid polypeptide reads, in one-letter code: DNA mismatch repair protein MutL (619 aa).

It belongs to the DNA mismatch repair MutL/HexB family.

Its function is as follows. This protein is involved in the repair of mismatches in DNA. It is required for dam-dependent methyl-directed DNA mismatch repair. May act as a 'molecular matchmaker', a protein that promotes the formation of a stable complex between two or more DNA-binding proteins in an ATP-dependent manner without itself being part of a final effector complex. This Shewanella frigidimarina (strain NCIMB 400) protein is DNA mismatch repair protein MutL.